A 570-amino-acid polypeptide reads, in one-letter code: Pentatricopeptide repeat-containing protein At1g31430 (570 aa).

13 PPR repeats span residues Ser10–Pro44, Asp45–Phe79, Asp80–Arg110, Asp111–Glu141, Asp147–Glu177, Ser181–Cys215, Trp216–Lys242, Asp243–Pro277, Asp278–Val312, Asp313–Arg343, Asp344–Leu378, Asp379–Pro414, and Lys415–Thr449. The type E motif stretch occupies residues Val453–Asp528. The tract at residues Gly529 to Leu561 is type E(+) motif.

The protein belongs to the PPR family. PCMP-E subfamily.

The sequence is that of Pentatricopeptide repeat-containing protein At1g31430 (PCMP-E55) from Arabidopsis thaliana (Mouse-ear cress).